Consider the following 62-residue polypeptide: Bacteriocin lactacin-F subunit LafX (62 aa).

Positions 1–14 are excised as a propeptide; it reads MKLNDKELSKIVGG.

It belongs to the bacteriocin class IIB family. As to quaternary structure, this bacteriocin depends upon the complementation of two peptides for activity: LafA and LafX. Associated with a 180 kDa bacteriocin complex.

Heat stable bacteriocin active against Enterococcus faecalis and other Lactobacilli. The chain is Bacteriocin lactacin-F subunit LafX (lafX) from Lactobacillus johnsonii (strain CNCM I-12250 / La1 / NCC 533).